The following is a 245-amino-acid chain: Terpene cyclase ausL (245 aa).

7 helical membrane-spanning segments follow: residues 17–37 (ILAISEVLKVVAAVGWSVNYI), 51–71 (IGILPLCCDIGWEFVYAWMFP), 76–96 (HWQGVVRVWFFLHSAVLLVTL), 113–133 (IVFIYIFVTIVFGAGQYALAA), 138–158 (ALGFHWGGALCQFLSSSGGIA), 170–190 (SYLIWFARAISTFAGFIKLCI), and 206–226 (MCWFYIVTVLSFDAAYPFLYF).

This sequence belongs to the paxB family.

The protein localises to the membrane. It participates in secondary metabolite biosynthesis; terpenoid biosynthesis. Its function is as follows. Terpene cyclase; part of the gene cluster A that mediates the biosynthesis of the fungal meroterpenoid acetoxydehydroaustin. The first step of the pathway is the synthesis of 3,5-dimethylorsellinic acid by the polyketide synthase ausA. 3,5-dimethylorsellinic acid is then prenylated by the polyprenyl transferase ausN. Further epoxidation by the FAD-dependent monooxygenase ausM and cyclization by the probable terpene cyclase ausL lead to the formation of protoaustinoid A. Protoaustinoid A is then oxidized to spiro-lactone preaustinoid A3 by the combined action of the FAD-binding monooxygenases ausB and ausC, and the dioxygenase ausE. Acid-catalyzed keto-rearrangement and ring contraction of the tetraketide portion of preaustinoid A3 by ausJ lead to the formation of preaustinoid A4. The aldo-keto reductase ausK, with the help of ausH, is involved in the next step by transforming preaustinoid A4 into isoaustinone which is in turn hydroxylated by the P450 monooxygenase ausI to form austinolide. The cytochrome P450 monooxygenase ausG then modifies austinolide to austinol. Austinol is further acetylated to austin by the O-acetyltransferase ausP, which spontaneously changes to dehydroaustin. The cytochrome P450 monooxygenase then converts dehydroaustin is into 7-dehydrodehydroaustin. The hydroxylation catalyzed by ausR permits the second O-acetyltransferase ausQ to add an additional acetyl group to the molecule, leading to the formation of acetoxydehydroaustin. Due to genetic rearrangements of the clusters and the subsequent loss of some enzymes, the end product of the Penicillium brasilianum austinoid biosynthesis clusters is acetoxydehydroaustin. The chain is Terpene cyclase ausL from Penicillium brasilianum.